Reading from the N-terminus, the 167-residue chain is Putative universal stress protein SSP1056 (167 aa).

This sequence belongs to the universal stress protein A family.

It is found in the cytoplasm. This Staphylococcus saprophyticus subsp. saprophyticus (strain ATCC 15305 / DSM 20229 / NCIMB 8711 / NCTC 7292 / S-41) protein is Putative universal stress protein SSP1056.